Reading from the N-terminus, the 402-residue chain is Nodal homolog 4-A (402 aa).

Positions 1–18 are cleaved as a signal peptide; sequence MHLYFYCLILLFVPGGNS. A propeptide spanning residues 19–278 is cleaved from the precursor; that stretch reads LGINSYLKHM…TIAHTRRHRR (260 aa). Residues Asn37, Asn238, and Asn340 are each glycosylated (N-linked (GlcNAc...) asparagine). Disulfide bonds link Cys302-Cys368, Cys331-Cys399, and Cys335-Cys401.

Belongs to the TGF-beta family. Homodimer; disulfide-linked. As to expression, during blastula stages, expressed in the endoderm at a higher level dorsally than ventrally. Expressed in the deep cells of the Spemann organizer at the gastrula stage. Expressed in the notochord (a derivative of the organizer) and neural tube during the neural stages.

It localises to the secreted. Its function is as follows. Cooperation and regulatory loops of multiple nodals are essential for mesendoderm patterning in early embryos. Plays a role in mesoderm formation and may be required for neural development. The sequence is that of Nodal homolog 4-A (nodal4-a) from Xenopus laevis (African clawed frog).